The primary structure comprises 385 residues: Lipid-A-disaccharide synthase (385 aa).

The protein belongs to the LpxB family.

The catalysed reaction is a lipid X + a UDP-2-N,3-O-bis[(3R)-3-hydroxyacyl]-alpha-D-glucosamine = a lipid A disaccharide + UDP + H(+). Its pathway is bacterial outer membrane biogenesis; LPS lipid A biosynthesis. Condensation of UDP-2,3-diacylglucosamine and 2,3-diacylglucosamine-1-phosphate to form lipid A disaccharide, a precursor of lipid A, a phosphorylated glycolipid that anchors the lipopolysaccharide to the outer membrane of the cell. The sequence is that of Lipid-A-disaccharide synthase from Rickettsia canadensis (strain McKiel).